Here is a 316-residue protein sequence, read N- to C-terminus: Alpha- and gamma-adaptin-binding protein p34 (316 aa).

The interval 198–232 (ASAESCHSEQQEPSPTAERTESLPGHHSGACGSAG) is disordered. The segment covering 222-232 (GHHSGACGSAG) has biased composition (low complexity). Phosphoserine occurs at positions 311 and 312.

As to quaternary structure, associated with AP-1 and AP-2 complexes.

It is found in the cytoplasm. It localises to the cytosol. Functionally, may be involved in endocytic recycling of growth factor receptors such as EGFR. The sequence is that of Alpha- and gamma-adaptin-binding protein p34 (Aagab) from Mus musculus (Mouse).